Reading from the N-terminus, the 314-residue chain is MKKKLINFKNALVLVVGDLILDCYWYSKNYYVVLEESLPIASINKIKKQPGGAANVAKNIAEIGGNSKIIGFIGMDYEGLTLKKLLNHTRIYPDLISIKKNKTITKIRILSEKKQLIRLDFQEKYISKKFNLLYEKIISSLTYYKVLVLSDYAKGTLVNVKKIITLAKKMSIPILIDPKGLDFKKYSGATLLTPNLSEFEQIVGKCHQEKQILQRGIKLVSELNLSALLVTRSKNGMTLFQPEKQPIHFPALSKTASDVTGAGDTVISIIASSLATGYSLEEACFYANVGASIVIQKIGTETLTINQLNTVLNI.

The protein belongs to the carbohydrate kinase PfkB family.

This is an uncharacterized protein from Buchnera aphidicola subsp. Schizaphis graminum (strain Sg).